A 428-amino-acid chain; its full sequence is Kynureninase (428 aa).

Residues threonine 104, threonine 105, 132–135 (FPSD), aspartate 213, histidine 216, and tyrosine 238 each bind pyridoxal 5'-phosphate. Lysine 239 bears the N6-(pyridoxal phosphate)lysine mark. Residues tryptophan 267 and threonine 295 each contribute to the pyridoxal 5'-phosphate site.

Belongs to the kynureninase family. In terms of assembly, homodimer. The cofactor is pyridoxal 5'-phosphate.

It carries out the reaction L-kynurenine + H2O = anthranilate + L-alanine + H(+). The enzyme catalyses 3-hydroxy-L-kynurenine + H2O = 3-hydroxyanthranilate + L-alanine + H(+). It participates in amino-acid degradation; L-kynurenine degradation; L-alanine and anthranilate from L-kynurenine: step 1/1. Its pathway is cofactor biosynthesis; NAD(+) biosynthesis; quinolinate from L-kynurenine: step 2/3. Its function is as follows. Catalyzes the cleavage of L-kynurenine (L-Kyn) and L-3-hydroxykynurenine (L-3OHKyn) into anthranilic acid (AA) and 3-hydroxyanthranilic acid (3-OHAA), respectively. The protein is Kynureninase of Bacillus thuringiensis subsp. konkukian (strain 97-27).